The primary structure comprises 188 residues: Threonylcarbamoyl-AMP synthase (188 aa).

The 186-residue stretch at Gln3–Gln188 folds into the YrdC-like domain.

The protein belongs to the SUA5 family. TsaC subfamily.

The protein resides in the cytoplasm. It carries out the reaction L-threonine + hydrogencarbonate + ATP = L-threonylcarbamoyladenylate + diphosphate + H2O. Its function is as follows. Required for the formation of a threonylcarbamoyl group on adenosine at position 37 (t(6)A37) in tRNAs that read codons beginning with adenine. Catalyzes the conversion of L-threonine, HCO(3)(-)/CO(2) and ATP to give threonylcarbamoyl-AMP (TC-AMP) as the acyladenylate intermediate, with the release of diphosphate. In Shewanella baltica (strain OS195), this protein is Threonylcarbamoyl-AMP synthase.